The primary structure comprises 293 residues: Probable E3 ubiquitin-protein ligase RNF144A-A (293 aa).

Residues 16–237 (PLVSCKLCLG…YDKGPCRNKL (222 aa)) form a TRIAD supradomain region. The Zn(2+) site is built by C20, C23, C43, C46, C111, C116, C135, C138, C143, C146, H151, C156, C186, and C189. The RING-type 1 zinc finger occupies 20–70 (CKLCLGEFPLEQMTTITQCQCVFCTMCLKQYVELLIKEGFETAISCPDSAC). The segment at 91–156 (QRYRKLQFEK…KASWHPDQDC (66 aa)) adopts an IBR-type zinc-finger fold. The segment at 186-215 (CPKCKVYIERDEGCAQMMCKNCKHAFCWYC) adopts an RING-type 2; atypical zinc-finger fold. C199 is an active-site residue. Residues C204, C207, C212, C215, H227, and C233 each contribute to the Zn(2+) site. Residues 251–271 (VVGIFAGFGLLLLVASPFLLL) form a helical membrane-spanning segment.

The protein belongs to the RBR family. RNF144 subfamily.

Its subcellular location is the membrane. It catalyses the reaction [E2 ubiquitin-conjugating enzyme]-S-ubiquitinyl-L-cysteine + [acceptor protein]-L-lysine = [E2 ubiquitin-conjugating enzyme]-L-cysteine + [acceptor protein]-N(6)-ubiquitinyl-L-lysine.. It functions in the pathway protein modification; protein ubiquitination. E3 ubiquitin-protein ligase which accepts ubiquitin from E2 ubiquitin-conjugating enzymes ube2l3 and ube2l6 in the form of a thioester and then directly transfers the ubiquitin to targeted substrates. This is Probable E3 ubiquitin-protein ligase RNF144A-A (rnf144aa) from Danio rerio (Zebrafish).